The chain runs to 586 residues: Old nuclease (586 aa).

The ATPase domain N-terminus stretch occupies residues 1–163 (MTVRLASVSI…VEDSTKCKNT (163 aa)). 34 to 38 (NAGKS) is a binding site for ATP. Residues 164-270 (TTIGKILSAI…SRFGHGTQRS (107 aa)) form a dimerization domain region. The interval 271–390 (IQMALIQYLA…TLSNSSYLLF (120 aa)) is ATPase domain C-terminus. A toprim domain region spans residues 393 to 586 (EVLLVEGKTE…DEMEDFIKWI (194 aa)). A divalent metal cation contacts are provided by Glu398, Glu402, Asp453, Asp455, Asp541, and Glu543. Arg570 serves as the catalytic Stabilizes transition state or protonates leaving group.

The protein belongs to the class 1 OLD nuclease family. Mg(2+) is required as a cofactor.

It catalyses the reaction Exonucleolytic cleavage in the 5'- to 3'-direction to yield nucleoside 5'-phosphates.. Its function is as follows. An exonuclease that acts preferentially on linear dsDNA, processively degrading it from 5'-3', releasing 5'-phosphomononucleotides. Initiates on 5'-phosphate and 5'-hydroxyl ends. Also acts on linear ssDNA, nicked DNA and RNA. ATP enhances but is not necessary for exonuclease activity; has ATPase activity that is not stimulated by DNA. The old protein kills E.coli recB and recC mutants and interferes with phage lambda growth. Both the exonuclease and ATPase activities are required in vivo. Probably interferes with lambda phage by degrading its linear DNA. Isolated as a mutant able to lysogenize E.coli strain C cells normally not susceptible to lysis by phage P2. This Enterobacteriaceae (Bacteriophage P2) protein is Old nuclease.